The following is a 279-amino-acid chain: Ribosomal RNA small subunit methyltransferase A (279 aa).

S-adenosyl-L-methionine-binding residues include asparagine 25, leucine 27, glycine 52, glutamate 73, aspartate 98, and asparagine 120.

It belongs to the class I-like SAM-binding methyltransferase superfamily. rRNA adenine N(6)-methyltransferase family. RsmA subfamily.

Its subcellular location is the cytoplasm. The catalysed reaction is adenosine(1518)/adenosine(1519) in 16S rRNA + 4 S-adenosyl-L-methionine = N(6)-dimethyladenosine(1518)/N(6)-dimethyladenosine(1519) in 16S rRNA + 4 S-adenosyl-L-homocysteine + 4 H(+). Functionally, specifically dimethylates two adjacent adenosines (A1518 and A1519) in the loop of a conserved hairpin near the 3'-end of 16S rRNA in the 30S particle. May play a critical role in biogenesis of 30S subunits. In Magnetococcus marinus (strain ATCC BAA-1437 / JCM 17883 / MC-1), this protein is Ribosomal RNA small subunit methyltransferase A.